A 171-amino-acid polypeptide reads, in one-letter code: Sec-independent protein translocase protein TatB (171 aa).

A helical transmembrane segment spans residues 1–21; that stretch reads MFDIGFSELLLVFIIGLVVLG. The segment at 117–171 is disordered; the sequence is KDNETAHEGVTPAAAQTQASSPEQKPETTPEPVVKPAADAEPKTAAPSPSSSDKP. Positions 130–139 are enriched in polar residues; it reads AAQTQASSPE.

It belongs to the TatB family. As to quaternary structure, the Tat system comprises two distinct complexes: a TatABC complex, containing multiple copies of TatA, TatB and TatC subunits, and a separate TatA complex, containing only TatA subunits. Substrates initially bind to the TatABC complex, which probably triggers association of the separate TatA complex to form the active translocon.

The protein localises to the cell inner membrane. Functionally, part of the twin-arginine translocation (Tat) system that transports large folded proteins containing a characteristic twin-arginine motif in their signal peptide across membranes. Together with TatC, TatB is part of a receptor directly interacting with Tat signal peptides. TatB may form an oligomeric binding site that transiently accommodates folded Tat precursor proteins before their translocation. This chain is Sec-independent protein translocase protein TatB, found in Escherichia coli O6:K15:H31 (strain 536 / UPEC).